The following is a 183-amino-acid chain: ATP-dependent protease subunit HslV (183 aa).

The active site involves T13. The Na(+) site is built by G168, C171, and T174.

Belongs to the peptidase T1B family. HslV subfamily. As to quaternary structure, a double ring-shaped homohexamer of HslV is capped on each side by a ring-shaped HslU homohexamer. The assembly of the HslU/HslV complex is dependent on binding of ATP.

It is found in the cytoplasm. The catalysed reaction is ATP-dependent cleavage of peptide bonds with broad specificity.. Allosterically activated by HslU binding. Protease subunit of a proteasome-like degradation complex believed to be a general protein degrading machinery. This Xanthomonas campestris pv. campestris (strain ATCC 33913 / DSM 3586 / NCPPB 528 / LMG 568 / P 25) protein is ATP-dependent protease subunit HslV.